The chain runs to 509 residues: Polyadenylation factor subunit 2 (509 aa).

WD repeat units follow at residues 72–109 (YIHT…TLWN), 113–151 (FNFE…KYFE), 156–192 (NVKI…KVWN), 196–234 (STEE…KFWD), 238–278 (GTCI…RVFD), 282–321 (MKDV…NHYS), and 350–388 (YPTA…RFWS). 2 disordered regions span residues 385-409 (RFWS…EEQS) and 480-509 (SNSY…QNYR). Positions 390–406 (SRPDDKESTMDRHHLGE) are enriched in basic and acidic residues.

The protein localises to the nucleus. Functionally, required for 3'-end cleavage and polyadenylation of pre-mRNAs. Also involved in chromosome segregation where it has a role in chromosome attachment to the mitotic spindle. In Schizosaccharomyces pombe (strain 972 / ATCC 24843) (Fission yeast), this protein is Polyadenylation factor subunit 2 (pfs2).